Consider the following 217-residue polypeptide: MAAGSWTCLILAIALLCLPWLQEGSAFPTIPLSWLFNTAVFRAHHLHKLAFDTYPKLEEAYIPKEQKYSFLRNPQTSLCFSESIPTPSNKEETQQKSNLELLHISLLLIQSWLEPVQFLRSVFANHLVHTNSNFDIYLYLKKLEEGIQTLMERLEDGSPRTGQIFKETYSKYDTNSHNDDTLLKNYRLLYCFRKDMNKVETFLRTVRCRAVEGSCGF.

Residues 1 to 26 (MAAGSWTCLILAIALLCLPWLQEGSA) form the signal peptide. Intrachain disulfides connect Cys79–Cys191 and Cys208–Cys215. Residues Ser132 and Ser176 each carry the phosphoserine modification.

This sequence belongs to the somatotropin/prolactin family. As to expression, expressed in the placenta.

The protein localises to the secreted. In terms of biological role, plays an important role in growth control. Its major role in stimulating body growth is to stimulate the liver and other tissues to secrete IGF1. It stimulates both the differentiation and proliferation of myoblasts. It also stimulates amino acid uptake and protein synthesis in muscle and other tissues. This chain is Growth hormone variant (GH2), found in Macaca mulatta (Rhesus macaque).